The following is a 1127-amino-acid chain: E3 ubiquitin-protein ligase TRIM33 (1127 aa).

A compositionally biased stretch (gly residues) spans 1–18; it reads MAENKGGGEAESGGGGSG. Positions 1 to 118 are disordered; it reads MAENKGGGEA…PSAGPPPGPP (118 aa). A necessary for E3 ubiquitin-protein ligase activity and repression of SMAD4 signaling and transcriptional repression region spans residues 1–147; the sequence is MAENKGGGEA…AEPKLLPCLH (147 aa). The span at 19-37 shows a compositional bias: low complexity; the sequence is SAPVTAGAAGPAAQEAEPP. Gly residues predominate over residues 52-64; the sequence is RAGAEGGAAGPDD. Residues 65–97 are compositionally biased toward low complexity; that stretch reads GGVAAASSGSAQAASSPAASVGTGVAGGAVSTP. A compositionally biased stretch (pro residues) spans 98-118; sequence APAPASAPAPGPSAGPPPGPP. The RING-type zinc-finger motif lies at 125–154; sequence CAVCQQSLQSRREAEPKLLPCLHSFCLRCL. B box-type zinc fingers lie at residues 212 to 259 and 271 to 312; these read KSEQ…IRKK and QRPV…YQFL. 8 residues coordinate Zn(2+): Cys-217, Cys-220, Cys-241, His-245, Cys-276, His-279, Cys-299, and His-304. The necessary for oligomerization stretch occupies residues 299 to 401; it reads CQLLEHKEHR…QMKLLQQQND (103 aa). A coiled-coil region spans residues 299–401; sequence CQLLEHKEHR…QMKLLQQQND (103 aa). Glycyl lysine isopeptide (Lys-Gly) (interchain with G-Cter in SUMO2) cross-links involve residues Lys-329, Lys-334, Lys-481, and Lys-504. Arg-515 carries the post-translational modification Asymmetric dimethylarginine; alternate. Position 515 is an omega-N-methylarginine; alternate (Arg-515). A Glycyl lysine isopeptide (Lys-Gly) (interchain with G-Cter in SUMO2) cross-link involves residue Lys-527. Arg-535 is modified (omega-N-methylarginine). A disordered region spans residues 536–563; sequence MQQPPAPVPTTTTTTQQHPRQAAPQMLQ. Position 577 is an asymmetric dimethylarginine (Arg-577). Arg-591 carries the asymmetric dimethylarginine; alternate modification. Arg-591 carries the omega-N-methylarginine; alternate modification. An asymmetric dimethylarginine mark is found at Arg-598 and Arg-604. Disordered stretches follow at residues 608–629, 673–692, and 703–818; these read PQYSMMQPHLQRQHSNPGHAGP, NPENLPSLPDIPPIQLEDAG, and YISG…TPPL. Over residues 723 to 759 the composition is skewed to low complexity; that stretch reads PSALSPGSSGLSNSHTPVRPPSTSSTGSRGSCGSSGR. N6-acetyllysine; alternate occurs at positions 763 and 769. Glycyl lysine isopeptide (Lys-Gly) (interchain with G-Cter in SUMO2); alternate cross-links involve residues Lys-763 and Lys-769. Lys-774 is covalently cross-linked (Glycyl lysine isopeptide (Lys-Gly) (interchain with G-Cter in SUMO2)). Glycyl lysine isopeptide (Lys-Gly) (interchain with G-Cter in SUMO2); alternate cross-links involve residues Lys-776 and Lys-793. Residues Lys-776 and Lys-793 each participate in a glycyl lysine isopeptide (Lys-Gly) (interchain with G-Cter in SUMO1); alternate cross-link. An N6-acetyllysine; alternate modification is found at Lys-793. Positions 793–802 are enriched in basic and acidic residues; that stretch reads KQEKTEDGRR. Lys-796 participates in a covalent cross-link: Glycyl lysine isopeptide (Lys-Gly) (interchain with G-Cter in SUMO2). At Ser-803 the chain carries Phosphoserine. Low complexity predominate over residues 807 to 818; the sequence is LSSPESSLTPPL. Thr-815 bears the Phosphothreonine mark. Lys-861 participates in a covalent cross-link: Glycyl lysine isopeptide (Lys-Gly) (interchain with G-Cter in SUMO2). Ser-862 is subject to Phosphoserine. A PHD-type zinc finger spans residues 887–934; the sequence is EDWCAVCQNGGDLLCCEKCPKVFHLTCHVPTLLSFPSGDWICTFCRDI. An N6-acetyllysine modification is found at Lys-951. Position 953 is an N6-acetyllysine; alternate (Lys-953). Residue Lys-953 forms a Glycyl lysine isopeptide (Lys-Gly) (interchain with G-Cter in SUMO2); alternate linkage. Positions 957–1080 constitute a Bromo domain; the sequence is GLSPVDQRKC…LYFEDKLTEI (124 aa). Residues Lys-1007 and Lys-1043 each participate in a glycyl lysine isopeptide (Lys-Gly) (interchain with G-Cter in SUMO2) cross-link. Phosphothreonine is present on Thr-1051. A Glycyl lysine isopeptide (Lys-Gly) (interchain with G-Cter in SUMO2) cross-link involves residue Lys-1057. Residues 1088–1127 form a disordered region; sequence PLPEFEQEEDDGEVTEDSDEDFIQPRRKRLKSDERPVHIK. Acidic residues predominate over residues 1092–1109; it reads FEQEEDDGEVTEDSDEDF. Thr-1102 is modified (phosphothreonine). Ser-1105 bears the Phosphoserine mark. Lys-1118 is covalently cross-linked (Glycyl lysine isopeptide (Lys-Gly) (interchain with G-Cter in SUMO2)). Residues 1118–1127 are compositionally biased toward basic and acidic residues; sequence KSDERPVHIK. Ser-1119 carries the phosphoserine modification.

It belongs to the TRIM/RBCC family. As to quaternary structure, homooligomer and heterooligomer with TRIM24 and TRIM28 family members. Interacts with SMAD4 in unstimulated cells. Found in a complex with SMAD2 and SMAD3 upon addition of TGF-beta. Interacts with SMAD2 and SMAD3. Interacts with SMAD4 under basal and induced conditions and, upon TGF-beta signaling, with activated SMAD2. Forms a ternary complex with SMAD4 and SMAD2 upon TGF-beta signaling. Post-translationally, sumoylated with SUMO1. In terms of tissue distribution, expressed in stem cells at the bottom of the crypts of the colon (at protein level). Expressed in colon adenomas and adenocarcinomas (at protein level). Expressed in brain, lung, liver, spleen, thymus, prostate, kidney, testis, heart, placenta, pancreas, small intestine, ovary, colon, skeletal muscle and hematopoietic progenitors.

The protein localises to the nucleus. It catalyses the reaction S-ubiquitinyl-[E2 ubiquitin-conjugating enzyme]-L-cysteine + [acceptor protein]-L-lysine = [E2 ubiquitin-conjugating enzyme]-L-cysteine + N(6)-ubiquitinyl-[acceptor protein]-L-lysine.. Its pathway is protein modification; protein ubiquitination. Functionally, acts as an E3 ubiquitin-protein ligase. Promotes SMAD4 ubiquitination, nuclear exclusion and degradation via the ubiquitin proteasome pathway. According to PubMed:16751102, does not promote a decrease in the level of endogenous SMAD4. May act as a transcriptional repressor. Inhibits the transcriptional response to TGF-beta/BMP signaling cascade. Plays a role in the control of cell proliferation. Its association with SMAD2 and SMAD3 stimulates erythroid differentiation of hematopoietic stem/progenitor. Monoubiquitinates SMAD4 and acts as an inhibitor of SMAD4-dependent TGF-beta/BMP signaling cascade (Monoubiquitination of SMAD4 hampers its ability to form a stable complex with activated SMAD2/3 resulting in inhibition of TGF-beta/BMP signaling cascade). In Homo sapiens (Human), this protein is E3 ubiquitin-protein ligase TRIM33 (TRIM33).